Consider the following 337-residue polypeptide: Glutathione transferase 3 (337 aa).

Residues 1–239 are Cytoplasmic-facing; sequence MPTKSTFSRW…NKYQYTLDFC (239 aa). Residues S66, S72, S99, and S116 each carry the phosphoserine modification. The tract at residues 66–95 is disordered; that stretch reads SMTVDQSKDERNEYGSGSGNGSGSGSCDTA. The disordered stretch occupies residues 107–132; that stretch reads KEDDDEKPQSGDETSATKPLSSRNAN. A compositionally biased stretch (polar residues) spans 117 to 132; sequence GDETSATKPLSSRNAN. A helical transmembrane segment spans residues 240 to 260; that stretch reads LPILTWLLFFRGIPTLVSYYI. The Perinuclear space portion of the chain corresponds to 261–313; that stretch reads NFIRYDLNIELDPMTFNLTKFLISLAIFKTCNNKNIDFHSFRCVNQLWTQLCT. Residues 314-336 form a helical membrane-spanning segment; that stretch reads VNRSLGMVPLVFSMVSCLLTLYV. L337 is a topological domain (cytoplasmic).

It localises to the nucleus membrane. The protein is Glutathione transferase 3 (GTT3) of Saccharomyces cerevisiae (strain ATCC 204508 / S288c) (Baker's yeast).